A 440-amino-acid chain; its full sequence is Xylose isomerase (440 aa).

Residues H101 and D104 contribute to the active site. The Mg(2+) site is built by E232, E268, H271, D296, D307, D309, and D339.

The protein belongs to the xylose isomerase family. As to quaternary structure, homotetramer. Mg(2+) is required as a cofactor.

The protein resides in the cytoplasm. The catalysed reaction is alpha-D-xylose = alpha-D-xylulofuranose. This Escherichia coli O17:K52:H18 (strain UMN026 / ExPEC) protein is Xylose isomerase.